Consider the following 674-residue polypeptide: DNA ligase (674 aa).

NAD(+) is bound by residues 34 to 38, 84 to 85, and glutamate 116; these read DAEYD and SL. Lysine 118 acts as the N6-AMP-lysine intermediate in catalysis. Residues arginine 139, glutamate 174, lysine 291, and lysine 315 each contribute to the NAD(+) site. Residues cysteine 409, cysteine 412, cysteine 425, and cysteine 430 each coordinate Zn(2+). One can recognise a BRCT domain in the interval 586–674; sequence RGEEALKGLT…TGKPVETLAS (89 aa).

Belongs to the NAD-dependent DNA ligase family. LigA subfamily. It depends on Mg(2+) as a cofactor. Mn(2+) serves as cofactor.

The enzyme catalyses NAD(+) + (deoxyribonucleotide)n-3'-hydroxyl + 5'-phospho-(deoxyribonucleotide)m = (deoxyribonucleotide)n+m + AMP + beta-nicotinamide D-nucleotide.. Its function is as follows. DNA ligase that catalyzes the formation of phosphodiester linkages between 5'-phosphoryl and 3'-hydroxyl groups in double-stranded DNA using NAD as a coenzyme and as the energy source for the reaction. It is essential for DNA replication and repair of damaged DNA. The chain is DNA ligase from Thermus scotoductus.